We begin with the raw amino-acid sequence, 518 residues long: GMP synthase [glutamine-hydrolyzing] (518 aa).

In terms of domain architecture, Glutamine amidotransferase type-1 spans 8–201; that stretch reads TVLIIDFGSQ…VCKISGIKNN (194 aa). Catalysis depends on Cys85, which acts as the Nucleophile. Residues His175 and Glu177 contribute to the active site. Residues 202–393 form the GMPS ATP-PPase domain; that stretch reads WSMAAYRDQA…LGLPEEFIKR (192 aa). Residue 229–235 participates in ATP binding; that stretch reads SGGVDSS.

As to quaternary structure, homodimer.

The enzyme catalyses XMP + L-glutamine + ATP + H2O = GMP + L-glutamate + AMP + diphosphate + 2 H(+). It functions in the pathway purine metabolism; GMP biosynthesis; GMP from XMP (L-Gln route): step 1/1. In terms of biological role, catalyzes the synthesis of GMP from XMP. The chain is GMP synthase [glutamine-hydrolyzing] from Bartonella bacilliformis (strain ATCC 35685 / KC583 / Herrer 020/F12,63).